Reading from the N-terminus, the 715-residue chain is DNA ligase (715 aa).

NAD(+) contacts are provided by residues 47–51 (DADYD), 96–97 (SL), and E128. K130 serves as the catalytic N6-AMP-lysine intermediate. R151, E188, K306, and K330 together coordinate NAD(+). Residues C435, C438, C453, and C459 each contribute to the Zn(2+) site. One can recognise a BRCT domain in the interval 637–715 (RRDTAVAGKT…EDEWLALIGN (79 aa)).

The protein belongs to the NAD-dependent DNA ligase family. LigA subfamily. The cofactor is Mg(2+). Requires Mn(2+) as cofactor.

The enzyme catalyses NAD(+) + (deoxyribonucleotide)n-3'-hydroxyl + 5'-phospho-(deoxyribonucleotide)m = (deoxyribonucleotide)n+m + AMP + beta-nicotinamide D-nucleotide.. In terms of biological role, DNA ligase that catalyzes the formation of phosphodiester linkages between 5'-phosphoryl and 3'-hydroxyl groups in double-stranded DNA using NAD as a coenzyme and as the energy source for the reaction. It is essential for DNA replication and repair of damaged DNA. In Rhodopseudomonas palustris (strain TIE-1), this protein is DNA ligase.